The sequence spans 397 residues: MFHRIEEALEDLKQGKVVIVCDDENRENEGDFIALAEYITPETINFMITHGRGLVCVPITEGYAERLQLEPMVAHNTDSHHTAFTVSIDHVSTTTGISAHERATTIREMLNPASKGADFNRPGHIFPLIAKEGGVLRRAGHTEAAVDLAQLCGAEPAGVICEIINEDGTMARVPDLLQCAKQFDIKMITIEDLIAYRRHHETLVTREVEITLPTDFGTFHAIGYSNSLDTKEHIALVKGDISTGEPVLVRVHSECLTGDVFGSCRCDCGPQLHAALAQIEREGKGVLLYMRQEGRGIGLLNKLRAYKLQEEGFDTVEANEKLGFPADLRDYGIGAQILKDLGLQHLRLLTNNPRKIAGLQGYDLEVIERVPLQMPAKEENKTYLQTKVNKLGHLLNL.

The DHBP synthase stretch occupies residues 1–199 (MFHRIEEALE…IEDLIAYRRH (199 aa)). D-ribulose 5-phosphate-binding positions include 26 to 27 (RE), aspartate 31, 138 to 142 (RAGHT), and glutamate 162. Position 27 (glutamate 27) interacts with Mg(2+). Histidine 141 provides a ligand contact to Mg(2+). Positions 200 to 397 (HETLVTREVE…VNKLGHLLNL (198 aa)) are GTP cyclohydrolase II. A GTP-binding site is contributed by 250 to 254 (RVHSE). 3 residues coordinate Zn(2+): cysteine 255, cysteine 266, and cysteine 268. Residues glutamine 271, 293 to 295 (EGR), and threonine 315 each bind GTP. Aspartate 327 (proton acceptor; for GTP cyclohydrolase activity) is an active-site residue. Residue arginine 329 is the Nucleophile; for GTP cyclohydrolase activity of the active site. 2 residues coordinate GTP: threonine 350 and lysine 355.

The protein in the N-terminal section; belongs to the DHBP synthase family. This sequence in the C-terminal section; belongs to the GTP cyclohydrolase II family. Mg(2+) serves as cofactor. The cofactor is Mn(2+). It depends on Zn(2+) as a cofactor.

It catalyses the reaction D-ribulose 5-phosphate = (2S)-2-hydroxy-3-oxobutyl phosphate + formate + H(+). It carries out the reaction GTP + 4 H2O = 2,5-diamino-6-hydroxy-4-(5-phosphoribosylamino)-pyrimidine + formate + 2 phosphate + 3 H(+). It participates in cofactor biosynthesis; riboflavin biosynthesis; 2-hydroxy-3-oxobutyl phosphate from D-ribulose 5-phosphate: step 1/1. The protein operates within cofactor biosynthesis; riboflavin biosynthesis; 5-amino-6-(D-ribitylamino)uracil from GTP: step 1/4. Catalyzes the conversion of D-ribulose 5-phosphate to formate and 3,4-dihydroxy-2-butanone 4-phosphate. Its function is as follows. Catalyzes the conversion of GTP to 2,5-diamino-6-ribosylamino-4(3H)-pyrimidinone 5'-phosphate (DARP), formate and pyrophosphate. The protein is Riboflavin biosynthesis protein RibBA of Bacillus cereus (strain ATCC 10987 / NRS 248).